The chain runs to 409 residues: Elongation factor Tu (409 aa).

A tr-type G domain is found at 10–214; the sequence is KPHVNIGTIG…AVDSYIPTPE (205 aa). Positions 19-26 are G1; sequence GHVDHGKT. Residue 19–26 participates in GTP binding; that stretch reads GHVDHGKT. Residue Thr26 participates in Mg(2+) binding. Positions 60–64 are G2; that stretch reads GITIN. Positions 81–84 are G3; it reads DCPG. Residues 81–85 and 136–139 contribute to the GTP site; these read DCPGH and NKKD. Residues 136 to 139 form a G4 region; the sequence is NKKD. The interval 174-176 is G5; sequence SAK.

This sequence belongs to the TRAFAC class translation factor GTPase superfamily. Classic translation factor GTPase family. EF-Tu/EF-1A subfamily. As to quaternary structure, monomer.

The protein localises to the cytoplasm. The enzyme catalyses GTP + H2O = GDP + phosphate + H(+). Its function is as follows. GTP hydrolase that promotes the GTP-dependent binding of aminoacyl-tRNA to the A-site of ribosomes during protein biosynthesis. The protein is Elongation factor Tu of Microcystis aeruginosa (strain NIES-843 / IAM M-2473).